A 127-amino-acid polypeptide reads, in one-letter code: Large ribosomal subunit protein bL21 (127 aa).

Belongs to the bacterial ribosomal protein bL21 family. As to quaternary structure, part of the 50S ribosomal subunit. Contacts protein L20.

Functionally, this protein binds to 23S rRNA in the presence of protein L20. This chain is Large ribosomal subunit protein bL21, found in Synechococcus elongatus (strain ATCC 33912 / PCC 7942 / FACHB-805) (Anacystis nidulans R2).